Here is a 250-residue protein sequence, read N- to C-terminus: Manganese transport system ATP-binding protein MntB (250 aa).

One can recognise an ABC transporter domain in the interval 5 to 236; it reads VKVDNLSVFY…MVAKTYQGNL (232 aa). An ATP-binding site is contributed by 37–44; sequence GPNGAGKS.

This sequence belongs to the ABC transporter superfamily.

It localises to the cell membrane. Functionally, this protein is probably a component of a manganese permease, a binding protein-dependent, ATP-driven transport system. Probably responsible for energy coupling to the transport system. The sequence is that of Manganese transport system ATP-binding protein MntB (mntB) from Halalkalibacterium halodurans (strain ATCC BAA-125 / DSM 18197 / FERM 7344 / JCM 9153 / C-125) (Bacillus halodurans).